Here is a 460-residue protein sequence, read N- to C-terminus: Polygalacturonase (460 aa).

The first 26 residues, 1–26, serve as a signal peptide directing secretion; sequence MALKTQLLWSFVVVFVVSFSTTSCSG. Residue Asn280 is glycosylated (N-linked (GlcNAc...) asparagine). Asp292 (proton donor) is an active-site residue. The active site involves His315. N-linked (GlcNAc...) asparagine glycosylation is present at Asn421.

It belongs to the glycosyl hydrolase 28 family.

The protein localises to the secreted. It localises to the cell wall. The enzyme catalyses (1,4-alpha-D-galacturonosyl)n+m + H2O = (1,4-alpha-D-galacturonosyl)n + (1,4-alpha-D-galacturonosyl)m.. Its function is as follows. Acts in concert with the pectinesterase, in the ripening process. Is involved in cell wall metabolism, specifically in polyuronide degradation. The protein is Polygalacturonase of Malus domestica (Apple).